The chain runs to 221 residues: Ribosomal RNA large subunit methyltransferase E (221 aa).

Positions 60, 62, 89, 105, and 134 each coordinate S-adenosyl-L-methionine. Lys-174 acts as the Proton acceptor in catalysis.

This sequence belongs to the class I-like SAM-binding methyltransferase superfamily. RNA methyltransferase RlmE family.

It is found in the cytoplasm. It carries out the reaction uridine(2552) in 23S rRNA + S-adenosyl-L-methionine = 2'-O-methyluridine(2552) in 23S rRNA + S-adenosyl-L-homocysteine + H(+). Specifically methylates the uridine in position 2552 of 23S rRNA at the 2'-O position of the ribose in the fully assembled 50S ribosomal subunit. This Cupriavidus metallidurans (strain ATCC 43123 / DSM 2839 / NBRC 102507 / CH34) (Ralstonia metallidurans) protein is Ribosomal RNA large subunit methyltransferase E.